The following is a 505-amino-acid chain: Maturase K (505 aa).

The protein belongs to the intron maturase 2 family. MatK subfamily.

It localises to the plastid. The protein localises to the chloroplast. Functionally, usually encoded in the trnK tRNA gene intron. Probably assists in splicing its own and other chloroplast group II introns. This Rosa stellata (Star rose) protein is Maturase K.